The primary structure comprises 205 residues: MCTRKYFLSKKATIVAGVDEVGCGSLVGAVVASAVLMLYPDQEQLFSGLIDSKALSNKKRLRFCNYIQKYSLHWSIGMVNVTEIDQLNIFQARLLSIKRAICNLSMIPDLVLIDGKHAPSLNKNILYQCFVKGDSRIPVISAASIIAKVTRDQAMMMLHTQYPKYGFHRNKGYATVFHLKQLDLYGPTIYHRKTFAPVKYMLSMC.

In terms of domain architecture, RNase H type-2 spans 13-205; sequence TIVAGVDEVG…APVKYMLSMC (193 aa). The a divalent metal cation site is built by aspartate 19, glutamate 20, and aspartate 114.

Belongs to the RNase HII family. Mn(2+) serves as cofactor. It depends on Mg(2+) as a cofactor.

The protein localises to the cytoplasm. It catalyses the reaction Endonucleolytic cleavage to 5'-phosphomonoester.. Endonuclease that specifically degrades the RNA of RNA-DNA hybrids. This is Ribonuclease HII from Blochmanniella floridana.